The primary structure comprises 211 residues: tRNA (guanine-N(7)-)-methyltransferase (211 aa).

E44, D69, D96, and D118 together coordinate S-adenosyl-L-methionine. D118 is an active-site residue. A substrate-binding site is contributed by K122. The segment at 124–129 (RHEKRR) is interaction with RNA. Substrate is bound by residues D154 and 191–194 (TEYE).

It belongs to the class I-like SAM-binding methyltransferase superfamily. TrmB family.

The enzyme catalyses guanosine(46) in tRNA + S-adenosyl-L-methionine = N(7)-methylguanosine(46) in tRNA + S-adenosyl-L-homocysteine. The protein operates within tRNA modification; N(7)-methylguanine-tRNA biosynthesis. In terms of biological role, catalyzes the formation of N(7)-methylguanine at position 46 (m7G46) in tRNA. The sequence is that of tRNA (guanine-N(7)-)-methyltransferase from Streptococcus equi subsp. equi (strain 4047).